The primary structure comprises 1066 residues: Exportin-T (1066 aa).

Belongs to the exportin family.

It localises to the nucleus. The protein resides in the cytoplasm. Functionally, tRNA nucleus export receptor which facilitates tRNA translocation across the nuclear pore complex. Involved in pre-tRNA splicing, probably by affecting the interaction of pre-tRNA with splicing endonuclease. This chain is Exportin-T (LOS1), found in Laccaria bicolor (strain S238N-H82 / ATCC MYA-4686) (Bicoloured deceiver).